We begin with the raw amino-acid sequence, 451 residues long: Tryptophan--tRNA ligase (451 aa).

Residues 10 to 12 (TTT) and 18 to 19 (GN) contribute to the ATP site. The 'HIGH' region motif lies at 11-19 (TTGTPHLGN). Asp143 is a binding site for L-tryptophan. ATP is bound by residues 155–157 (GRD), Leu195, and 202–206 (KMSKS). Positions 202 to 206 (KMSKS) match the 'KMSKS' region motif.

The protein belongs to the class-I aminoacyl-tRNA synthetase family. As to quaternary structure, homodimer.

It is found in the cytoplasm. The enzyme catalyses tRNA(Trp) + L-tryptophan + ATP = L-tryptophyl-tRNA(Trp) + AMP + diphosphate + H(+). In terms of biological role, catalyzes the attachment of tryptophan to tRNA(Trp). The sequence is that of Tryptophan--tRNA ligase from Bordetella bronchiseptica (strain ATCC BAA-588 / NCTC 13252 / RB50) (Alcaligenes bronchisepticus).